The following is a 518-amino-acid chain: Integrator complex subunit 14 (518 aa).

The VWFA domain occupies 2 to 204 (PTVVVMDVSL…KNVQSMFGKL (203 aa)). Residues Ser10, Ser12, and Thr86 each contribute to the Mg(2+) site.

The protein belongs to the Integrator subunit 14 family. As to quaternary structure, component of the Integrator complex, composed of core subunits INTS1, INTS2, INTS3, INTS4, INTS5, INTS6, INTS7, INTS8, INTS9/RC74, INTS10, INTS11/CPSF3L, INTS12, INTS13, INTS14 and INTS15. The core complex associates with protein phosphatase 2A subunits PPP2CA and PPP2R1A, to form the Integrator-PP2A (INTAC) complex. INTS14 is part of the tail subcomplex, composed of INTS10, INTS13, INTS14 and INTS15.

It localises to the nucleus. Component of the integrator complex, a multiprotein complex that terminates RNA polymerase II (Pol II) transcription in the promoter-proximal region of genes. The integrator complex provides a quality checkpoint during transcription elongation by driving premature transcription termination of transcripts that are unfavorably configured for transcriptional elongation: the complex terminates transcription by (1) catalyzing dephosphorylation of the C-terminal domain (CTD) of Pol II subunit POLR2A/RPB1 and SUPT5H/SPT5, (2) degrading the exiting nascent RNA transcript via endonuclease activity and (3) promoting the release of Pol II from bound DNA. The integrator complex is also involved in terminating the synthesis of non-coding Pol II transcripts, such as enhancer RNAs (eRNAs), small nuclear RNAs (snRNAs), telomerase RNAs and long non-coding RNAs (lncRNAs). Within the integrator complex, INTS14 is part of the integrator tail module that acts as a platform for the recruitment of transcription factors at promoters. The sequence is that of Integrator complex subunit 14 from Xenopus tropicalis (Western clawed frog).